The following is a 596-amino-acid chain: Aspartate--tRNA(Asp/Asn) ligase (596 aa).

An L-aspartate-binding site is contributed by glutamate 175. Residues 199–202 form an aspartate region; it reads QMFK. Arginine 221 and histidine 451 together coordinate L-aspartate. An ATP-binding site is contributed by 221–223; it reads RDE. Glutamate 485 is a binding site for ATP. Position 492 (arginine 492) interacts with L-aspartate. ATP is bound at residue 537–540; it reads GVDR.

Belongs to the class-II aminoacyl-tRNA synthetase family. Type 1 subfamily. In terms of assembly, homodimer.

The protein localises to the cytoplasm. The enzyme catalyses tRNA(Asx) + L-aspartate + ATP = L-aspartyl-tRNA(Asx) + AMP + diphosphate. Aspartyl-tRNA synthetase with relaxed tRNA specificity since it is able to aspartylate not only its cognate tRNA(Asp) but also tRNA(Asn). Reaction proceeds in two steps: L-aspartate is first activated by ATP to form Asp-AMP and then transferred to the acceptor end of tRNA(Asp/Asn). This Zymomonas mobilis subsp. mobilis (strain ATCC 31821 / ZM4 / CP4) protein is Aspartate--tRNA(Asp/Asn) ligase.